A 140-amino-acid chain; its full sequence is Ribonucleases P/MRP protein subunit POP7 (140 aa).

The disordered stretch occupies residues 1-21 (MALKKNTHNKSTKRVTKHPSL). At serine 115 the chain carries Phosphoserine.

This sequence belongs to the histone-like Alba family. Component of nuclear RNase P and RNase MRP complexes. RNase P consists of an RNA moiety and at least 9 protein subunits including POP1, POP3, POP4, POP5, POP6, POP7, POP8, RPP1 and RPR2. RNase MRP complex consists of an RNA moiety and at least 10 protein subunits including POP1, POP3, POP4, POP5, POP6, POP7, POP8, RMP1, RPP1 and SNM1, many of which are shared with the RNase P complex.

The protein resides in the nucleus. It carries out the reaction Endonucleolytic cleavage of RNA, removing 5'-extranucleotides from tRNA precursor.. Its function is as follows. Component of ribonuclease P, a protein complex that generates mature tRNA molecules by cleaving their 5'-ends. Also a component of RNase MRP, which cleaves pre-rRNA sequences. The protein is Ribonucleases P/MRP protein subunit POP7 (POP7) of Saccharomyces cerevisiae (strain ATCC 204508 / S288c) (Baker's yeast).